Reading from the N-terminus, the 124-residue chain is Small ribosomal subunit protein uS12 (124 aa).

The residue at position 89 (aspartate 89) is a 3-methylthioaspartic acid.

The protein belongs to the universal ribosomal protein uS12 family. As to quaternary structure, part of the 30S ribosomal subunit. Contacts proteins S8 and S17. May interact with IF1 in the 30S initiation complex.

With S4 and S5 plays an important role in translational accuracy. Its function is as follows. Interacts with and stabilizes bases of the 16S rRNA that are involved in tRNA selection in the A site and with the mRNA backbone. Located at the interface of the 30S and 50S subunits, it traverses the body of the 30S subunit contacting proteins on the other side and probably holding the rRNA structure together. The combined cluster of proteins S8, S12 and S17 appears to hold together the shoulder and platform of the 30S subunit. This is Small ribosomal subunit protein uS12 (rpsL) from Mannheimia haemolytica (Pasteurella haemolytica).